Reading from the N-terminus, the 228-residue chain is Max-interacting protein 1 (228 aa).

2 disordered regions span residues 29–76 and 162–228; these read GYAS…NELE and GSTI…SFTS. The segment covering 43 to 56 has biased composition (basic residues); it reads QHSKPPRRLSRAQK. Over residues 57–70 the composition is skewed to polar residues; that stretch reads HSSGSSNTSTANRS. The bHLH domain maps to 67-119; the sequence is ANRSTHNELEKNRRAHLRLCLERLKVLIPLGPDCTRHTTLGLLNKAKAHIKKL. Residues 173–183 are compositionally biased toward acidic residues; sequence EREEIEVDVES. Positions 216 to 228 are enriched in polar residues; that stretch reads GYSSASVKLSFTS.

In terms of assembly, efficient DNA binding requires dimerization with another bHLH protein. Binds DNA as a heterodimer with MAX. Interacts with SMC3. Interacts with RNF17.

The protein localises to the nucleus. Its function is as follows. Transcriptional repressor. MXI1 binds with MAX to form a sequence-specific DNA-binding protein complex which recognizes the core sequence 5'-CAC[GA]TG-3'. MXI1 thus antagonizes MYC transcriptional activity by competing for MAX. This is Max-interacting protein 1 (Mxi1) from Rattus norvegicus (Rat).